Here is a 466-residue protein sequence, read N- to C-terminus: tRNA-2-methylthio-N(6)-dimethylallyladenosine synthase (466 aa).

The region spanning 3 to 123 (KKLYIKTYGC…LPEMVARAVR (121 aa)) is the MTTase N-terminal domain. The [4Fe-4S] cluster site is built by Cys-12, Cys-48, Cys-86, Cys-162, Cys-166, and Cys-169. The 234-residue stretch at 148 to 381 (SPAGPSAFLS…QQLLTAQQTA (234 aa)) folds into the Radical SAM core domain. The region spanning 384 to 446 (TACVGRVQPV…ANSLSGTVVV (63 aa)) is the TRAM domain.

Belongs to the methylthiotransferase family. MiaB subfamily. Monomer. Requires [4Fe-4S] cluster as cofactor.

The protein resides in the cytoplasm. It catalyses the reaction N(6)-dimethylallyladenosine(37) in tRNA + (sulfur carrier)-SH + AH2 + 2 S-adenosyl-L-methionine = 2-methylsulfanyl-N(6)-dimethylallyladenosine(37) in tRNA + (sulfur carrier)-H + 5'-deoxyadenosine + L-methionine + A + S-adenosyl-L-homocysteine + 2 H(+). In terms of biological role, catalyzes the methylthiolation of N6-(dimethylallyl)adenosine (i(6)A), leading to the formation of 2-methylthio-N6-(dimethylallyl)adenosine (ms(2)i(6)A) at position 37 in tRNAs that read codons beginning with uridine. This chain is tRNA-2-methylthio-N(6)-dimethylallyladenosine synthase, found in Rhodospirillum centenum (strain ATCC 51521 / SW).